Consider the following 175-residue polypeptide: DELTA-stichotoxin-Hcr4a (175 aa).

A plays an important role in the hemolytic activity region spans residues 1-10; it reads ALAGAIIAGA. The interval 9-28 is N-terminal region; sequence GASLTFQILDKVLAELGQVS. Phosphocholine contacts are provided by Ser-52, Val-85, Ser-103, Pro-105, Tyr-131, Tyr-135, and Tyr-136. Residues 103–118 are trp-rich region, which is important for the binding to lipid membrane; the sequence is SVPFDYNLYSNWWDVK.

It belongs to the actinoporin family. Sea anemone subfamily. Octamer or nonamer in membranes. Monomer in the soluble state.

It localises to the secreted. The protein localises to the nematocyst. Its subcellular location is the target cell membrane. Functionally, pore-forming protein that forms cations-selective hydrophilic pores of around 1 nm and causes cardiac stimulation and cytolysis. Pore formation is a multi-step process that involves specific recognition of membrane sphingomyelin (but neither cholesterol nor phosphatidylcholine) using aromatic rich region and adjacent phosphocholine (POC) binding site, firm binding to the membrane (mainly driven by hydrophobic interactions) accompanied by the transfer of the N-terminal region to the lipid-water interface and finally pore formation after oligomerization of monomers. In Radianthus crispa (Leathery sea anemone), this protein is DELTA-stichotoxin-Hcr4a.